Reading from the N-terminus, the 345-residue chain is Phosphoribosylformylglycinamidine cyclo-ligase (345 aa).

This sequence belongs to the AIR synthase family.

It is found in the cytoplasm. It catalyses the reaction 2-formamido-N(1)-(5-O-phospho-beta-D-ribosyl)acetamidine + ATP = 5-amino-1-(5-phospho-beta-D-ribosyl)imidazole + ADP + phosphate + H(+). It functions in the pathway purine metabolism; IMP biosynthesis via de novo pathway; 5-amino-1-(5-phospho-D-ribosyl)imidazole from N(2)-formyl-N(1)-(5-phospho-D-ribosyl)glycinamide: step 2/2. The polypeptide is Phosphoribosylformylglycinamidine cyclo-ligase (Prochlorococcus marinus (strain MIT 9313)).